Here is a 571-residue protein sequence, read N- to C-terminus: Gag-Pro polyprotein (571 aa).

Gly2 is lipidated: N-myristoyl glycine; by host. The PPXY motif motif lies at 100-103 (PPPY). Repeats lie at residues 342–362 (PPGP…CPTK) and 367–387 (PPGP…CPTL). 2 CCHC-type zinc fingers span residues 345–362 (PCYR…CPTK) and 370–387 (PCPI…CPTL). Thr453 serves as the catalytic Protease; shared with dimeric partner.

Homodimer; the homodimers are part of the immature particles. Interacts with human TSG101 and NEDD4; these interactions are essential for budding and release of viral particles. In terms of assembly, homodimer; further assembles as homohexamers. Post-translationally, specific enzymatic cleavages by the viral protease yield mature proteins. The polyprotein is cleaved during and after budding, this process is termed maturation. The protease is autoproteolytically processed at its N- and C-termini. In terms of processing, myristoylated. Myristoylation of the matrix (MA) domain mediates the transport and binding of Gag polyproteins to the host plasma membrane and is required for the assembly of viral particles.

The protein resides in the virion. In terms of biological role, the matrix domain targets Gag, Gag-Pro and Gag-Pro-Pol polyproteins to the plasma membrane via a multipartite membrane binding signal, that includes its myristoylated N-terminus. Its function is as follows. Matrix protein. Functionally, forms the spherical core of the virus that encapsulates the genomic RNA-nucleocapsid complex. Binds strongly to viral nucleic acids and promote their aggregation. Also destabilizes the nucleic acids duplexes via highly structured zinc-binding motifs. In terms of biological role, the aspartyl protease mediates proteolytic cleavages of Gag and Gag-Pol polyproteins during or shortly after the release of the virion from the plasma membrane. Cleavages take place as an ordered, step-wise cascade to yield mature proteins. This process is called maturation. Displays maximal activity during the budding process just prior to particle release from the cell. This is Gag-Pro polyprotein from Bovine leukemia virus (isolate Japanese BLV-1) (BLV).